A 100-amino-acid polypeptide reads, in one-letter code: Cytochrome b (100 aa).

The next 3 membrane-spanning stretches (helical) occupy residues 1–21, 45–66, and 81–100; these read MGSL…FLAM, WLIR…YLHI, and WNIG…VGYV. Residues His-51 and His-65 each contribute to the heme b site.

Belongs to the cytochrome b family. As to quaternary structure, the cytochrome bc1 complex contains 3 respiratory subunits (MT-CYB, CYC1 and UQCRFS1), 2 core proteins (UQCRC1 and UQCRC2) and probably 6 low-molecular weight proteins. Requires heme b as cofactor.

The protein resides in the mitochondrion inner membrane. Component of the ubiquinol-cytochrome c reductase complex (complex III or cytochrome b-c1 complex) that is part of the mitochondrial respiratory chain. The b-c1 complex mediates electron transfer from ubiquinol to cytochrome c. Contributes to the generation of a proton gradient across the mitochondrial membrane that is then used for ATP synthesis. In Polypterus sp. (Bichir), this protein is Cytochrome b (mt-cyb).